Reading from the N-terminus, the 395-residue chain is Na(+)/H(+) antiporter NhaA (395 aa).

12 helical membrane passes run 18–38, 64–84, 100–120, 129–149, 160–180, 182–202, 205–225, 226–246, 266–286, 295–315, 333–353, and 368–388; these read AGGI…NSPL, LLMW…GLEV, IFPA…YWLV, GGWA…LVLL, FLLA…ALFF, HDLS…LILL, FKVS…VSVL, KSGV…PLKG, FLIL…GLGM, LGVT…FSYL, IFAV…LASL, and LGIL…LFVT.

Belongs to the NhaA Na(+)/H(+) (TC 2.A.33) antiporter family.

The protein resides in the cell inner membrane. The catalysed reaction is Na(+)(in) + 2 H(+)(out) = Na(+)(out) + 2 H(+)(in). In terms of biological role, na(+)/H(+) antiporter that extrudes sodium in exchange for external protons. The protein is Na(+)/H(+) antiporter NhaA of Histophilus somni (strain 129Pt) (Haemophilus somnus).